The chain runs to 206 residues: Translation initiation factor IF-3 (206 aa).

The protein belongs to the IF-3 family. In terms of assembly, monomer.

Its subcellular location is the cytoplasm. IF-3 binds to the 30S ribosomal subunit and shifts the equilibrium between 70S ribosomes and their 50S and 30S subunits in favor of the free subunits, thus enhancing the availability of 30S subunits on which protein synthesis initiation begins. The protein is Translation initiation factor IF-3 of Chlorobium luteolum (strain DSM 273 / BCRC 81028 / 2530) (Pelodictyon luteolum).